A 448-amino-acid chain; its full sequence is Trigger factor (448 aa).

Residues 172–257 form the PPIase FKBP-type domain; that stretch reads GDRVTVDFVG…MKKIEWPHLP (86 aa).

This sequence belongs to the FKBP-type PPIase family. Tig subfamily.

The protein localises to the cytoplasm. The enzyme catalyses [protein]-peptidylproline (omega=180) = [protein]-peptidylproline (omega=0). In terms of biological role, involved in protein export. Acts as a chaperone by maintaining the newly synthesized protein in an open conformation. Functions as a peptidyl-prolyl cis-trans isomerase. In Burkholderia lata (strain ATCC 17760 / DSM 23089 / LMG 22485 / NCIMB 9086 / R18194 / 383), this protein is Trigger factor.